A 195-amino-acid chain; its full sequence is Pyridoxal 5'-phosphate synthase subunit PdxT (195 aa).

An L-glutamine-binding site is contributed by Gly46–Ser48. Cys78 (nucleophile) is an active-site residue. L-glutamine contacts are provided by residues Arg105 and Ile133–Arg134. Residues His169 and Glu171 each act as charge relay system in the active site.

The protein belongs to the glutaminase PdxT/SNO family. In the presence of PdxS, forms a dodecamer of heterodimers. Only shows activity in the heterodimer.

It carries out the reaction aldehydo-D-ribose 5-phosphate + D-glyceraldehyde 3-phosphate + L-glutamine = pyridoxal 5'-phosphate + L-glutamate + phosphate + 3 H2O + H(+). The catalysed reaction is L-glutamine + H2O = L-glutamate + NH4(+). The protein operates within cofactor biosynthesis; pyridoxal 5'-phosphate biosynthesis. Its function is as follows. Catalyzes the hydrolysis of glutamine to glutamate and ammonia as part of the biosynthesis of pyridoxal 5'-phosphate. The resulting ammonia molecule is channeled to the active site of PdxS. In Geobacillus thermodenitrificans (strain NG80-2), this protein is Pyridoxal 5'-phosphate synthase subunit PdxT.